The sequence spans 86 residues: Small ribosomal subunit protein uS15 (86 aa).

The segment at 1-22 is disordered; the sequence is MSVDTQKVIEDNKRSAQDTGSP. Residues 7–16 are compositionally biased toward basic and acidic residues; the sequence is KVIEDNKRSA.

This sequence belongs to the universal ribosomal protein uS15 family. Part of the 30S ribosomal subunit. Forms a bridge to the 50S subunit in the 70S ribosome, contacting the 23S rRNA.

Functionally, one of the primary rRNA binding proteins, it binds directly to 16S rRNA where it helps nucleate assembly of the platform of the 30S subunit by binding and bridging several RNA helices of the 16S rRNA. Forms an intersubunit bridge (bridge B4) with the 23S rRNA of the 50S subunit in the ribosome. The polypeptide is Small ribosomal subunit protein uS15 (Xanthomonas campestris pv. campestris (strain 8004)).